Here is a 256-residue protein sequence, read N- to C-terminus: Small ribosomal subunit protein eS1 (256 aa).

Ala2 carries the N-acetylalanine; partial modification.

The protein belongs to the eukaryotic ribosomal protein eS1 family. In terms of assembly, component of the small ribosomal subunit. Mature ribosomes consist of a small (40S) and a large (60S) subunit. The 40S subunit contains about 33 different proteins and 1 molecule of RNA (18S). The 60S subunit contains about 49 different proteins and 3 molecules of RNA (25S, 5.8S and 5S).

The protein resides in the cytoplasm. This Postia placenta (strain ATCC 44394 / Madison 698-R) (Brown rot fungus) protein is Small ribosomal subunit protein eS1.